The primary structure comprises 127 residues: Large ribosomal subunit protein uL24 (127 aa).

This sequence belongs to the universal ribosomal protein uL24 family. In terms of assembly, part of the 50S ribosomal subunit.

One of two assembly initiator proteins, it binds directly to the 5'-end of the 23S rRNA, where it nucleates assembly of the 50S subunit. In terms of biological role, one of the proteins that surrounds the polypeptide exit tunnel on the outside of the subunit. The chain is Large ribosomal subunit protein uL24 from Leptospira biflexa serovar Patoc (strain Patoc 1 / ATCC 23582 / Paris).